The following is a 327-amino-acid chain: Malate dehydrogenase (327 aa).

11 to 17 serves as a coordination point for NAD(+); sequence GAAGQIA. Residues R92 and R98 each coordinate substrate. NAD(+) is bound by residues N105, Q112, and 128–130; that span reads VGN. The substrate site is built by N130 and R160. H185 acts as the Proton acceptor in catalysis.

This sequence belongs to the LDH/MDH superfamily. MDH type 2 family.

The catalysed reaction is (S)-malate + NAD(+) = oxaloacetate + NADH + H(+). Its function is as follows. Catalyzes the reversible oxidation of malate to oxaloacetate. In Magnetococcus marinus (strain ATCC BAA-1437 / JCM 17883 / MC-1), this protein is Malate dehydrogenase.